The chain runs to 403 residues: Phosphopentomutase (403 aa).

6 residues coordinate Mn(2+): aspartate 13, aspartate 298, histidine 303, aspartate 339, histidine 340, and histidine 351.

Belongs to the phosphopentomutase family. Mn(2+) serves as cofactor.

The protein resides in the cytoplasm. The enzyme catalyses 2-deoxy-alpha-D-ribose 1-phosphate = 2-deoxy-D-ribose 5-phosphate. The catalysed reaction is alpha-D-ribose 1-phosphate = D-ribose 5-phosphate. It functions in the pathway carbohydrate degradation; 2-deoxy-D-ribose 1-phosphate degradation; D-glyceraldehyde 3-phosphate and acetaldehyde from 2-deoxy-alpha-D-ribose 1-phosphate: step 1/2. Isomerase that catalyzes the conversion of deoxy-ribose 1-phosphate (dRib-1-P) and ribose 1-phosphate (Rib-1-P) to deoxy-ribose 5-phosphate (dRib-5-P) and ribose 5-phosphate (Rib-5-P), respectively. The sequence is that of Phosphopentomutase from Streptococcus pneumoniae serotype 19F (strain G54).